Reading from the N-terminus, the 298-residue chain is GTPase Era (298 aa).

In terms of domain architecture, Era-type G spans 3 to 170 (KSGFVAILGR…VQLLKDNLEE (168 aa)). The G1 stretch occupies residues 11–18 (GRPNVGKS). 11-18 (GRPNVGKS) is a GTP binding site. The segment at 37 to 41 (QTTRN) is G2. Positions 58-61 (DTPG) are G3. Residues 58–62 (DTPGI) and 120–123 (NKID) each bind GTP. The segment at 120–123 (NKID) is G4. Positions 149–151 (ISA) are G5. In terms of domain architecture, KH type-2 spans 201-279 (TQQEVPHSVA…YLETWVKVKK (79 aa)).

It belongs to the TRAFAC class TrmE-Era-EngA-EngB-Septin-like GTPase superfamily. Era GTPase family. Monomer.

The protein localises to the cytoplasm. The protein resides in the cell membrane. Its function is as follows. An essential GTPase that binds both GDP and GTP, with rapid nucleotide exchange. Plays a role in 16S rRNA processing and 30S ribosomal subunit biogenesis and possibly also in cell cycle regulation and energy metabolism. In Streptococcus equi subsp. equi (strain 4047), this protein is GTPase Era.